A 663-amino-acid polypeptide reads, in one-letter code: Protein-arginine deiminase type-1 (663 aa).

Residues Asn153, Asp155, Asp157, Asp165, Asp176, Asp179, Gln351, Glu353, Lys364, Asp371, Ser372, Asn375, Phe409, and Leu412 each contribute to the Ca(2+) site. The Nucleophile role is filled by Cys645.

This sequence belongs to the protein arginine deiminase family. In terms of assembly, monomer. Ca(2+) is required as a cofactor. As to expression, detected in epidermal keratinocytes (at protein level). Epidermis, prostate, testis, placenta, spleen and thymus.

The protein localises to the cytoplasm. The catalysed reaction is L-arginyl-[protein] + H2O = L-citrullyl-[protein] + NH4(+). Functionally, catalyzes the deimination of arginine residues of proteins. This is Protein-arginine deiminase type-1 (PADI1) from Homo sapiens (Human).